A 288-amino-acid polypeptide reads, in one-letter code: Acetyl-coenzyme A carboxylase carboxyl transferase subunit beta (288 aa).

Residues 33–288 (LFSQCPGCKH…LVRLHGGSPR (256 aa)) form the CoA carboxyltransferase N-terminal domain. Residues cysteine 37, cysteine 40, cysteine 55, and cysteine 58 each contribute to the Zn(2+) site. A C4-type zinc finger spans residues 37-58 (CPGCKHTIYQKDLGSERICPHC).

The protein belongs to the AccD/PCCB family. As to quaternary structure, acetyl-CoA carboxylase is a heterohexamer composed of biotin carboxyl carrier protein (AccB), biotin carboxylase (AccC) and two subunits each of ACCase subunit alpha (AccA) and ACCase subunit beta (AccD). The cofactor is Zn(2+).

The protein localises to the cytoplasm. The enzyme catalyses N(6)-carboxybiotinyl-L-lysyl-[protein] + acetyl-CoA = N(6)-biotinyl-L-lysyl-[protein] + malonyl-CoA. It functions in the pathway lipid metabolism; malonyl-CoA biosynthesis; malonyl-CoA from acetyl-CoA: step 1/1. In terms of biological role, component of the acetyl coenzyme A carboxylase (ACC) complex. Biotin carboxylase (BC) catalyzes the carboxylation of biotin on its carrier protein (BCCP) and then the CO(2) group is transferred by the transcarboxylase to acetyl-CoA to form malonyl-CoA. In Streptococcus pneumoniae serotype 4 (strain ATCC BAA-334 / TIGR4), this protein is Acetyl-coenzyme A carboxylase carboxyl transferase subunit beta.